The following is a 549-amino-acid chain: Oxygen-dependent choline dehydrogenase (549 aa).

4–33 provides a ligand contact to FAD; sequence DFVIIGSGSAGSALAYRLSEDGKNSVLVIE. Catalysis depends on His-465, which acts as the Proton acceptor. Residues 530–549 form a disordered region; sequence PLARSNQEPWINPRAAVSDR.

Belongs to the GMC oxidoreductase family. Requires FAD as cofactor.

It carries out the reaction choline + A = betaine aldehyde + AH2. It catalyses the reaction betaine aldehyde + NAD(+) + H2O = glycine betaine + NADH + 2 H(+). Its pathway is amine and polyamine biosynthesis; betaine biosynthesis via choline pathway; betaine aldehyde from choline (cytochrome c reductase route): step 1/1. Its function is as follows. Involved in the biosynthesis of the osmoprotectant glycine betaine. Catalyzes the oxidation of choline to betaine aldehyde and betaine aldehyde to glycine betaine at the same rate. In Rhizobium etli (strain ATCC 51251 / DSM 11541 / JCM 21823 / NBRC 15573 / CFN 42), this protein is Oxygen-dependent choline dehydrogenase.